The sequence spans 355 residues: S-adenosylmethionine:tRNA ribosyltransferase-isomerase (355 aa).

Belongs to the QueA family. In terms of assembly, monomer.

The protein resides in the cytoplasm. The catalysed reaction is 7-aminomethyl-7-carbaguanosine(34) in tRNA + S-adenosyl-L-methionine = epoxyqueuosine(34) in tRNA + adenine + L-methionine + 2 H(+). It functions in the pathway tRNA modification; tRNA-queuosine biosynthesis. Transfers and isomerizes the ribose moiety from AdoMet to the 7-aminomethyl group of 7-deazaguanine (preQ1-tRNA) to give epoxyqueuosine (oQ-tRNA). The polypeptide is S-adenosylmethionine:tRNA ribosyltransferase-isomerase (Burkholderia orbicola (strain MC0-3)).